The chain runs to 639 residues: Chaperone protein DnaK (639 aa).

Threonine 198 is modified (phosphothreonine; by autocatalysis). The disordered stretch occupies residues 602-639 (QAKSQAQGGDNADAGKQANATADDVVDAEFEEVKDDKK). Residues 625–639 (DVVDAEFEEVKDDKK) are compositionally biased toward acidic residues.

The protein belongs to the heat shock protein 70 family.

Acts as a chaperone. This Shewanella baltica (strain OS195) protein is Chaperone protein DnaK.